The following is a 551-amino-acid chain: Colicin E3 (551 aa).

Disordered stretches follow at residues 1 to 74 (MSGG…SGGG), 243 to 269 (TLSP…NTRD), and 293 to 320 (PDQV…EAAE). Residues 1–315 (MSGGDGRGHN…RQQEWDATHP (315 aa)) form a translocation (T) domain region. Over residues 20–35 (INGGPTGLGVGGGASD) the composition is skewed to gly residues. Residues 35–39 (DGSGW) carry the Binds to TolB motif. Low complexity predominate over residues 36–45 (GSGWSSENNP). Positions 46-74 (WGGGSGSGIHWGGGSGHGNGGGNGNSGGG) are enriched in gly residues. Positions 296 to 320 (VKQRQDEENRRQQEWDATHPVEAAE) are enriched in basic and acidic residues. The stretch at 316-378 (VEAAERNYER…IAEIKQFNRF (63 aa)) forms a coiled coil. Residues 316–450 (VEAAERNYER…SAENNLNDEK (135 aa)) form a receptor-binding (R) domain region. The Hairpin signature appears at 379–385 (AHDPMAG). A coiled-coil region spans residues 386-450 (GHRMWQMAGL…SAENNLNDEK (65 aa)). Positions 406–505 (NKQAAFDAAA…KRWTGDKGRK (100 aa)) are disordered. The span at 430–472 (ESRKKKEDKKRSAENNLNDEKNKPRKGFKDYGHDYHPAPKTEN) shows a compositional bias: basic and acidic residues. The linker stretch occupies residues 451–456 (NKPRKG). The interval 455–551 (KGFKDYGHDY…DPKRNIKKYL (97 aa)) is ribosome inactivating activity. The tract at residues 457–551 (FKDYGHDYHP…DPKRNIKKYL (95 aa)) is cytotoxic RNase (C) domain. Histidine 513 (proton donor) is an active-site residue. Glutamate 517 functions as the Proton acceptor in the catalytic mechanism. The disordered stretch occupies residues 517-551 (EGYRASDGQHLGSFDPKTGNQLKGPDPKRNIKKYL). A binding of immunity protein region spans residues 530–551 (FDPKTGNQLKGPDPKRNIKKYL). Arginine 545 is an active-site residue.

This sequence belongs to the cloacin colicin family. In terms of assembly, native colicin E3 is a 1:1 complex of A chain and protein B (cognate immunity protein, Im3); protein A is 1,000-fold more active in inactivating ribosomes than the native complex. The cytotoxic fragment (residues 456-551, C95) forms a 1:1 complex with Im3. The receptor-binding (R) domain binds obliquely to its receptor BtuB without displacing BtuB's central plug; binding unfolds the R domain. The N-terminal 83 residues (T83) bind OmpF; trimeric complexes with colicin E3, BtuB and OmpF can be cross-linked and immunoprecipitated. Probably inserts into the OmpF pore as an unfolded peptide and spans the OmpF pore. In a complex with T.thermophilus 70S ribosomes, cytotoxic fragment C96 contacts 16S rRNA, 23S rRNA, mRNA, P-site tRNA and ribosomal protein uS12.

It localises to the secreted. In terms of biological role, colicins are polypeptide toxins produced by and active against E.coli and closely related bacteria. Cleaves 16S rRNA between adenosine-1492 and guanosine-1493 (E.coli 16S rRNA numbering), releasing a 49 nucleotide (nt) 'colicin' fragment. Inactivates 70S ribosomes or 30S subunits by endonucleolytically cleaving 16S RNA at a specific site about 50 nt from its C-terminus. Produces 5'-OH-guanosine and a 2',3'-cyclic phosphate adenosine. Mixing a susceptible (e.g. strain K12 / A19) and colicin E3 producing strain results in total protein translation inhibition within 11 minutes. Its activity is inhibited by cognate immunity protein Im3. Its function is as follows. Uses BtuB, the vitamin B transporter, as a receptor on the outer membrane; binds via the receptor (R) domain. Then the translocation domain (T) probably 'fishes' for its outer membrane translocon protein, OmpF. The N-terminal 83 residues (T83) can bind to and occlude OmpF channels. A complex of the cytotoxic C-terminal 96 residues (C96) plus the immunity protein does not occlude OmpF; upon complex separation from the immunity protein C96 becomes disordered and is able to bind OmpF. The N-terminus probably binds TolB and then reinserts into an empty pore of trimeric OmpF; the rest of the protein is pulled through OmpF and crosses the inner membrane, where the cytotoxic fragment is probably released by protease FtsH. The sequence is that of Colicin E3 (ceaC) from Escherichia coli.